The primary structure comprises 379 residues: Serine/threonine-protein kinase spe-6 (379 aa).

The Protein kinase domain maps to 26–302 (WKVLRNIYSG…SQAATEHQVT (277 aa)). ATP is bound by residues 32–40 (IYSGPFSDV) and K55. Residue D147 is the Proton acceptor of the active site. The tract at residues 331 to 379 (ASAKLDAKDNANESMDIEFDDMPPKEGISKSLSAEKSCTKNVETARTEK) is disordered. Positions 360–372 (KSLSAEKSCTKNV) are enriched in polar residues.

This sequence belongs to the protein kinase superfamily. CK1 Ser/Thr protein kinase family.

It catalyses the reaction L-seryl-[protein] + ATP = O-phospho-L-seryl-[protein] + ADP + H(+). It carries out the reaction L-threonyl-[protein] + ATP = O-phospho-L-threonyl-[protein] + ADP + H(+). Its function is as follows. Serine/threonine-protein kinase which is involved in spermatogenesis. In spermatocytes, regulates meiosis and the localization and assembly of major sperm protein (MSP) into fibrous bodies. In addition, may suppress the initiation of spermiogenesis downstream of spe-8, spe-12, spe-27 and spe-29. The sequence is that of Serine/threonine-protein kinase spe-6 from Caenorhabditis elegans.